The primary structure comprises 80 residues: Omega-conotoxin-like 1 (80 aa).

Positions 1 to 22 (MKLTCVLIVVVLFLTACQLITT) are cleaved as a signal peptide. A propeptide spanning residues 23–49 (DDSTGKQRYQAWKLRSKMQNSVLSRLS) is cleaved from the precursor. 3 cysteine pairs are disulfide-bonded: Cys-52–Cys-66, Cys-59–Cys-70, and Cys-65–Cys-79.

This sequence belongs to the conotoxin O1 superfamily. In terms of processing, peptide predicted to begin at Arg-51, but it seems more probable that it begins at Cys-52, since this position corresponds to a dibasic residue cleavage. Expressed by the venom duct.

The protein resides in the secreted. Its function is as follows. Omega-conotoxins act at presynaptic membranes, they bind and block voltage-gated calcium channels (Cav). This chain is Omega-conotoxin-like 1, found in Conus capitaneus (Captain cone).